Consider the following 390-residue polypeptide: Succinyl-diaminopimelate desuccinylase (390 aa).

H74 contacts Zn(2+). D76 is a catalytic residue. Zn(2+) is bound at residue D107. E140 functions as the Proton acceptor in the catalytic mechanism. Residues E141, E169, and H363 each coordinate Zn(2+).

The protein belongs to the peptidase M20A family. DapE subfamily. In terms of assembly, homodimer. The cofactor is Zn(2+). Requires Co(2+) as cofactor.

The enzyme catalyses N-succinyl-(2S,6S)-2,6-diaminopimelate + H2O = (2S,6S)-2,6-diaminopimelate + succinate. Its pathway is amino-acid biosynthesis; L-lysine biosynthesis via DAP pathway; LL-2,6-diaminopimelate from (S)-tetrahydrodipicolinate (succinylase route): step 3/3. Catalyzes the hydrolysis of N-succinyl-L,L-diaminopimelic acid (SDAP), forming succinate and LL-2,6-diaminopimelate (DAP), an intermediate involved in the bacterial biosynthesis of lysine and meso-diaminopimelic acid, an essential component of bacterial cell walls. This chain is Succinyl-diaminopimelate desuccinylase, found in Bartonella bacilliformis (strain ATCC 35685 / KC583 / Herrer 020/F12,63).